A 154-amino-acid chain; its full sequence is Putative pre-16S rRNA nuclease (154 aa).

This sequence belongs to the YqgF nuclease family.

The protein resides in the cytoplasm. In terms of biological role, could be a nuclease involved in processing of the 5'-end of pre-16S rRNA. The chain is Putative pre-16S rRNA nuclease from Rickettsia canadensis (strain McKiel).